The following is a 112-amino-acid chain: Small ribosomal subunit protein bS6 (112 aa).

The protein belongs to the bacterial ribosomal protein bS6 family.

Functionally, binds together with bS18 to 16S ribosomal RNA. The chain is Small ribosomal subunit protein bS6 (rpsF) from Chlamydia muridarum (strain MoPn / Nigg).